The primary structure comprises 93 residues: uncharacterized protein (93 aa).

A Sm domain is found at 1 to 76 (MDSHTTEKRR…IQTIEPDESM (76 aa)).

In terms of assembly, part of the core SMN complex at least composed of smn1, yip11/gem2, gem6, gem7 and gem8. Interacts with gem7; the interaction is direct.

In terms of biological role, the SMN complex catalyzes the assembly of small nuclear ribonucleoproteins (snRNPs), the building blocks of the spliceosome, and thereby plays an important role in the splicing of cellular pre-mRNAs. Most spliceosomal snRNPs contain a common set of Sm proteins smb1, smd1, smd2, smd3, sme1, smf1 and smg1 that assemble in a heptameric protein ring on the Sm site of the small nuclear RNA to form the core snRNP (Sm core). In the cytosol, the Sm proteins smd1, smd2, sme1, smf1 and smg1 (5Sm) are trapped in an inactive 6S pICln-Sm complex by the chaperone saf5. To complete assembly of core snRNPs, the SMN complex accepts 5Sm from saf5. Binding of snRNA inside 5Sm triggers eviction of the SMN complex, thereby allowing binding of smd3 and smb1 to complete assembly of the core snRNP. This is an uncharacterized protein from Schizosaccharomyces pombe (strain 972 / ATCC 24843) (Fission yeast).